We begin with the raw amino-acid sequence, 1237 residues long: Putative structural protein VP3 (1237 aa).

One can recognise a PPPDE domain in the interval 963-1178 (GFLDKRVGDA…WDVSTAARMQ (216 aa)). Catalysis depends on residues histidine 1001 and cysteine 1149.

The protein localises to the virion. The protein is Putative structural protein VP3 (S3) of Lymantria dispar cypovirus 1 (isolate Rao) (LdCPV-1).